The primary structure comprises 304 residues: Thyroxine 5-deiodinase (304 aa).

A disordered region spans residues 1 to 22; sequence MPRQAASRLVVGEGEGPPGASG. Over 1-44 the chain is Cytoplasmic; sequence MPRQAASRLVVGEGEGPPGASGPAATMLRSLLLHSLRLCAQTAS. The helical; Signal-anchor for type II membrane protein transmembrane segment at 45–67 threads the bilayer; that stretch reads CLVLFPRFLGTAFMLWLLDFLCI. Topologically, residues 68–304 are extracellular; that stretch reads RKHFLRRRHP…QLHGTRPHRF (237 aa). Sec-170 is a catalytic residue. Sec-170 is a non-standard amino acid (selenocysteine).

Belongs to the iodothyronine deiodinase family. As to quaternary structure, monomer. Homodimer. May undergo minor heretodimerization with DIO1 and DIO2.

It is found in the cell membrane. Its subcellular location is the endosome membrane. The catalysed reaction is 3,3',5'-triiodo-L-thyronine + iodide + A + H(+) = L-thyroxine + AH2. It catalyses the reaction 3,3'-diiodo-L-thyronine + iodide + A + H(+) = 3,3',5-triiodo-L-thyronine + AH2. The enzyme catalyses 3-iodo-L-thyronine + iodide + A + H(+) = 3,5-diiodo-L-thyronine + AH2. It carries out the reaction L-thyronine + iodide + A + H(+) = 3-iodo-L-thyronine + AH2. The catalysed reaction is 3',5'-diiodo-L-thyronine + iodide + A + H(+) = 3,3',5'-triiodo-L-thyronine + AH2. It catalyses the reaction 3'-iodo-L-thyronine + iodide + A + H(+) = 3,3'-diiodo-L-thyronine + AH2. The enzyme catalyses 3,3',5'-triiodothyronamine + iodide + A + H(+) = 3,3',5,5'-tetraiodothyronamine + AH2. It carries out the reaction 3',5'-diiodothyronamine + iodide + A + H(+) = 3,3',5'-triiodothyronamine + AH2. The catalysed reaction is 3,3'-diiodothyronamine + iodide + A + H(+) = 3,3',5-triiodothyronamine + AH2. It catalyses the reaction 3-iodothyronamine + iodide + A + H(+) = 3,5-diiodothyronamine + AH2. The enzyme catalyses 3'-iodothyronamine + iodide + A + H(+) = 3,3'-diiodothyronamine + AH2. It carries out the reaction thyronamine + iodide + A + H(+) = 3-iodothyronamine + AH2. Plays a crucial role in the metabolism of thyroid hormones (TH) and has specific roles in TH activation and inactivation by deiodination. Catalyzes the deiodination of L-thyroxine (T4) to 3,3',5'-triiodothyronine (rT3), 3,5,3'-triiodothyronine (T3) to 3,3'-diiodothyronine (3,3'-T2), 3,5-diiodothyronine (3,5-T2) to 3-monoiodothyronine (3-T1), rT3 to 3',5'-diiodothyronine (3',5'-T2) and 3,3'-T2 to 3'-monoiodothyronine (3'-T1) via inner-ring deiodination (IRD). Catalyzes the deiodination of 3-T1 to L-thyronine (T0) via outer-ring deiodination (ORD). Catalyzes the tyrosyl ring deiodinations of 3,3',5,5'-tetraiodothyronamine, 3,3',5'-triiodothyronamine, 3,5,3'-triiodothyronamine, 3,5-diiodothyronamine, 3,3'-diiodothyronamine and 3-iodothyronamine. This is Thyroxine 5-deiodinase (Dio3) from Mus musculus (Mouse).